The chain runs to 94 residues: Small ribosomal subunit protein bS16 (94 aa).

This sequence belongs to the bacterial ribosomal protein bS16 family.

The protein is Small ribosomal subunit protein bS16 of Thermosipho africanus (strain TCF52B).